The chain runs to 247 residues: Protein NipSnap homolog 3B (247 aa).

An N6-succinyllysine mark is found at lysine 45 and lysine 57.

Belongs to the NipSnap family.

The polypeptide is Protein NipSnap homolog 3B (NIPSNAP3B) (Homo sapiens (Human)).